The primary structure comprises 671 residues: Preterminal protein (671 aa).

Residues 380-389 carry the Nuclear localization signal motif; sequence RLPVRRRRRR. The disordered stretch occupies residues 386 to 409; the sequence is RRRRVPPPPPPPEEEEEGEALMEE. Positions 397–409 are enriched in acidic residues; that stretch reads PEEEEEGEALMEE. An O-(5'-phospho-DNA)-serine modification is found at Ser-580. The segment at 645 to 671 is disordered; sequence GADVPLPPLPAGPEPPLPPGARPRHRF. The segment covering 649 to 665 has biased composition (pro residues); it reads PLPPLPAGPEPPLPPGA.

This sequence belongs to the adenoviridae terminal protein family. In terms of assembly, heterodimer with the polymerase; this heterodimer binds to bp 9 to 18 of the genome. Interacts with host POU2F1; POU2F1 binds to the auxiliary sequences in the inverted terminal repeats and tethers the pTP-POL heterodimer to the origin DNA thereby participating in the assembly of the pre-initiation complex (POL-TP-DBP-NFIA-POU2F1). Preterminal protein is used to replicate viral genome, upon genomic encapsidation it is processed first into iTP and finally into TP by adenovirus protease.

The protein localises to the host nucleus matrix. In terms of biological role, protein covalently bound to the viral DNA that acts as a primer for viral genomic replication by DNA strand displacement. Assembles on the viral origin of replication in an initiation complex with viral polymerase, DBP, host NFIA and host POU2F1/OCT1. During initiation, the polymerase covalently couples the first dCTP with Ser-580 of pTP. The terminal protein stimulates the template activity over 20 fold compared to protein-free templates. Neo-synthesized viral genomes are linked to two preterminal proteins, one for each 5' end. These new genomes are encapsidated in the nucleus, and during capsid maturation by viral protease, preterminal protein is first cleaved into intermediary (iTP), then into mature TP. May play a role in host nuclear matrix localization of genomic DNA. The protein is Preterminal protein of Homo sapiens (Human).